We begin with the raw amino-acid sequence, 199 residues long: Prolactin-1 (199 aa).

3 disulfides stabilise this stretch: cysteine 4–cysteine 11, cysteine 58–cysteine 174, and cysteine 191–cysteine 199. The N-linked (GlcNAc...) asparagine glycan is linked to asparagine 60.

The protein belongs to the somatotropin/prolactin family. Post-translationally, glycosylated.

It is found in the secreted. This is Prolactin-1 from Crocodylus novaeguineae (Crocodile).